Here is a 291-residue protein sequence, read N- to C-terminus: Lys-63-specific deubiquitinase BRCC36 (291 aa).

Alanine 2 bears the N-acetylalanine mark. Residues 12–179 form the MPN domain; it reads VHLESDAFLV…YTCFQSIQAQ (168 aa). Residues histidine 122, histidine 124, and aspartate 135 each coordinate Zn(2+). The JAMM motif signature appears at 122-135; it reads HSHPHITVWPSHVD. A Phosphoserine modification is found at serine 233.

This sequence belongs to the peptidase M67A family. BRCC36 subfamily. Component of the ARISC complex, at least composed of UIMC1/RAP80, ABRAXAS1, BRCC3/BRCC36, BABAM2 and BABAM1/NBA1. Component of the BRCA1-A complex, at least composed of BRCA1, BARD1, UIMC1/RAP80, ABRAXAS1, BRCC3/BRCC36, BABAM2 and BABAM1/NBA1. In the BRCA1-A complex, interacts directly with ABRAXAS1 and BABAM2. Component of the BRISC complex, at least composed of ABRAXAS2, BRCC3/BRCC36, BABAM2 and BABAM1/NBA1. Identified in a complex with SHMT2 and the other subunits of the BRISC complex. In the BRISC complex, interacts directly with ABRAXAS2. Identified in a complex with ABRAXAS2 and NUMA1. The BRISC complex interacts with the CSN complex. Component of the BRCA1/BRCA2 containing complex (BRCC), which also contains BRCA1, BRCA2, BARD1, BABAM2 and RAD51. BRCC is a ubiquitin E3 ligase complex that enhances cellular survival following DNA damage. Interacts with BRCA1. Binds polyubiquitin. Interacts with PWWP2B. Interacts with HDAC1; this interaction is enhanced in the presence of PWWP2B. It depends on Zn(2+) as a cofactor.

It is found in the nucleus. It localises to the cytoplasm. The protein resides in the cytoskeleton. The protein localises to the spindle pole. Metalloprotease that specifically cleaves 'Lys-63'-linked polyubiquitin chains. Does not have activity toward 'Lys-48'-linked polyubiquitin chains. Component of the BRCA1-A complex, a complex that specifically recognizes 'Lys-63'-linked ubiquitinated histones H2A and H2AX at DNA lesions sites, leading to target the BRCA1-BARD1 heterodimer to sites of DNA damage at double-strand breaks (DSBs). In the BRCA1-A complex, it specifically removes 'Lys-63'-linked ubiquitin on histones H2A and H2AX, antagonizing the RNF8-dependent ubiquitination at double-strand breaks (DSBs). Catalytic subunit of the BRISC complex, a multiprotein complex that specifically cleaves 'Lys-63'-linked ubiquitin in various substrates. Mediates the specific 'Lys-63'-specific deubiquitination associated with the COP9 signalosome complex (CSN), via the interaction of the BRISC complex with the CSN complex. The BRISC complex is required for normal mitotic spindle assembly and microtubule attachment to kinetochores via its role in deubiquitinating NUMA1. Plays a role in interferon signaling via its role in the deubiquitination of the interferon receptor IFNAR1; deubiquitination increases IFNAR1 activity by enhancing its stability and cell surface expression. Acts as a regulator of the NLRP3 inflammasome by mediating deubiquitination of NLRP3, leading to NLRP3 inflammasome assembly. Down-regulates the response to bacterial lipopolysaccharide (LPS) via its role in IFNAR1 deubiquitination. Deubiquitinates HDAC1 and PWWP2B leading to their stabilization. The sequence is that of Lys-63-specific deubiquitinase BRCC36 (Brcc3) from Mus musculus (Mouse).